The following is a 90-amino-acid chain: Acylphosphatase (90 aa).

Residues 4-90 (TRRVRFYGRV…TEFQDFQIKR (87 aa)) form the Acylphosphatase-like domain. Catalysis depends on residues R19 and N37.

Belongs to the acylphosphatase family.

It carries out the reaction an acyl phosphate + H2O = a carboxylate + phosphate + H(+). The chain is Acylphosphatase (acyP) from Thermoplasma volcanium (strain ATCC 51530 / DSM 4299 / JCM 9571 / NBRC 15438 / GSS1).